The following is a 493-amino-acid chain: Guanosine-5'-triphosphate,3'-diphosphate pyrophosphatase (493 aa).

It belongs to the GppA/Ppx family. GppA subfamily.

The catalysed reaction is guanosine 3'-diphosphate 5'-triphosphate + H2O = guanosine 3',5'-bis(diphosphate) + phosphate + H(+). The protein operates within purine metabolism; ppGpp biosynthesis; ppGpp from GTP: step 2/2. Functionally, catalyzes the conversion of pppGpp to ppGpp. Guanosine pentaphosphate (pppGpp) is a cytoplasmic signaling molecule which together with ppGpp controls the 'stringent response', an adaptive process that allows bacteria to respond to amino acid starvation, resulting in the coordinated regulation of numerous cellular activities. The protein is Guanosine-5'-triphosphate,3'-diphosphate pyrophosphatase of Salmonella heidelberg (strain SL476).